Reading from the N-terminus, the 663-residue chain is Meiotically up-regulated gene 60 protein (663 aa).

The 67-residue stretch at 578-644 (PAEMHFYVPE…SENLWAVRSL (67 aa)) folds into the KH domain.

The protein resides in the cytoplasm. It is found in the nucleus. It localises to the cytoskeleton. Its subcellular location is the microtubule organizing center. The protein localises to the spindle pole body. Has a role in meiosis. This is Meiotically up-regulated gene 60 protein (mug60) from Schizosaccharomyces pombe (strain 972 / ATCC 24843) (Fission yeast).